The following is a 440-amino-acid chain: Thymidine phosphorylase (440 aa).

It belongs to the thymidine/pyrimidine-nucleoside phosphorylase family. Homodimer.

The catalysed reaction is thymidine + phosphate = 2-deoxy-alpha-D-ribose 1-phosphate + thymine. Its pathway is pyrimidine metabolism; dTMP biosynthesis via salvage pathway; dTMP from thymine: step 1/2. Its function is as follows. The enzymes which catalyze the reversible phosphorolysis of pyrimidine nucleosides are involved in the degradation of these compounds and in their utilization as carbon and energy sources, or in the rescue of pyrimidine bases for nucleotide synthesis. The chain is Thymidine phosphorylase from Escherichia coli O139:H28 (strain E24377A / ETEC).